The following is a 133-amino-acid chain: MQFSTVASIAAVAAVASAAANVTTATVSQESTTLVTITSCEDHVCSETVSPALVSTATVTVDDVITQYTTWCPLTTEAPKNGTSTAAPVTSTEAPKNTTSAAPTHSVTSYTGAAAKALPAAGALLAGAAALLL.

The first 18 residues, 1 to 18 (MQFSTVASIAAVAAVASA), serve as a signal peptide directing secretion. An N-linked (GlcNAc...) asparagine glycan is attached at Asn21. 3 O-linked (Man) threonine glycosylation sites follow: Thr23, Thr24, and Thr26. Residues Ser28 and Ser31 are each glycosylated (O-linked (Man) serine). Thr32, Thr33, Thr36, and Thr38 each carry an O-linked (Man) threonine glycan. Ser39 and Ser46 each carry an O-linked (Man) serine glycan. O-linked (Man) threonine glycosylation is present at Thr48. 2 consecutive repeat copies span residues 75-88 (TTEA…TAAP) and 91-103 (STEA…SAAP). The interval 79–104 (PKNGTSTAAPVTSTEAPKNTTSAAPT) is disordered. Lys80 participates in a covalent cross-link: Glycyl lysine isopeptide (Lys-Gly) (interchain with G-Cter in ubiquitin). Residues Asn81 and Asn97 are each glycosylated (N-linked (GlcNAc...) asparagine). Over residues 81–104 (NGTSTAAPVTSTEAPKNTTSAAPT) the composition is skewed to polar residues. A lipid anchor (GPI-anchor amidated glycine) is attached at Gly112. Residues 113–133 (AAAKALPAAGALLAGAAALLL) constitute a propeptide, removed in mature form.

To yeast protein YDR134C. Post-translationally, extensively O-glycosylated; glycans consist probably of single mannose residues. N-glycosylated. In terms of processing, the GPI-anchor is attached to the protein in the endoplasmic reticulum and serves to target the protein to the cell surface. There, the glucosamine-inositol phospholipid moiety is cleaved off and the GPI-modified mannoprotein is covalently attached via its lipidless GPI glycan remnant to the 1,6-beta-glucan of the outer cell wall layer.

The protein resides in the secreted. The protein localises to the cell wall. Its subcellular location is the membrane. Its function is as follows. Component of the cell wall. May play a role in the formation of a tightly packed outer mannan layer, which protects the inner glucan. In Saccharomyces cerevisiae (strain ATCC 204508 / S288c) (Baker's yeast), this protein is Covalently-linked cell wall protein 12 (CCW12).